The chain runs to 1069 residues: Thyrotropin-releasing hormone-degrading ectoenzyme (1069 aa).

Over residues 1-11 the composition is skewed to acidic residues; that stretch reads MALDGELGEQE. A disordered region spans residues 1 to 46; it reads MALDGELGEQEEEKKKKKKKKRKKKKEEEEEEEGAEKSSSPFAAAM. The Cytoplasmic segment spans residues 1–85; that stretch reads MALDGELGEQ…ERHIAVHKRL (85 aa). Positions 15-25 are enriched in basic residues; it reads KKKKKKKRKKK. The chain crosses the membrane as a helical; Signal-anchor for type II membrane protein span at residues 86 to 106; it reads VLAFAVSLVALLAVTMLAVLL. Topologically, residues 107-1069 are extracellular; sequence SLRFDECGAS…FQWLGKALRH (963 aa). The disordered stretch occupies residues 117–179; sequence ATPGADGGPS…PSEEEREPWE (63 aa). Over residues 121-136 the composition is skewed to gly residues; that stretch reads ADGGPSGFPERGGNGS. N134, N205, N220, N267, and N383 each carry an N-linked (GlcNAc...) asparagine glycan. 449-453 provides a ligand contact to substrate; it reads AAMEN. H485 provides a ligand contact to Zn(2+). Residue E486 is the Proton acceptor of the active site. Zn(2+) is bound by residues H489 and E508. N-linked (GlcNAc...) asparagine glycans are attached at residues N650, N679, N694, N708, N729, N845, and N951.

The protein belongs to the peptidase M1 family. As to quaternary structure, homodimer; disulfide-linked. Requires Zn(2+) as cofactor. Predominantly expressed in brain.

The protein localises to the membrane. It carries out the reaction Release of the N-terminal pyroglutamyl group from pGlu-|-His-Xaa tripeptides and pGlu-|-His-Xaa-Gly tetrapeptides.. Specific inactivation of TRH after its release. The sequence is that of Thyrotropin-releasing hormone-degrading ectoenzyme (TRHDE) from Homo sapiens (Human).